The primary structure comprises 208 residues: V-type ATP synthase subunit E (208 aa).

Belongs to the V-ATPase E subunit family.

Its function is as follows. Produces ATP from ADP in the presence of a proton gradient across the membrane. The sequence is that of V-type ATP synthase subunit E from Chlamydia felis (strain Fe/C-56) (Chlamydophila felis).